The sequence spans 500 residues: Probable malate:quinone oxidoreductase (500 aa).

The protein belongs to the MQO family. FAD is required as a cofactor.

It catalyses the reaction (S)-malate + a quinone = a quinol + oxaloacetate. It participates in carbohydrate metabolism; tricarboxylic acid cycle; oxaloacetate from (S)-malate (quinone route): step 1/1. The sequence is that of Probable malate:quinone oxidoreductase from Bacillus cereus (strain ZK / E33L).